The sequence spans 308 residues: Glycine--tRNA ligase alpha subunit (308 aa).

This sequence belongs to the class-II aminoacyl-tRNA synthetase family. As to quaternary structure, tetramer of two alpha and two beta subunits.

The protein resides in the cytoplasm. The enzyme catalyses tRNA(Gly) + glycine + ATP = glycyl-tRNA(Gly) + AMP + diphosphate. The polypeptide is Glycine--tRNA ligase alpha subunit (Polaromonas naphthalenivorans (strain CJ2)).